An 82-amino-acid polypeptide reads, in one-letter code: MLEGAKSIGAGAATIASAGAAIGIGNVFSSLIHSVARNPSLAKQSFGYAILGFALTEAIASFAPMMAFLISSVFRSVSRVTI.

Helical transmembrane passes span isoleucine 8–phenylalanine 28 and serine 45–alanine 67.

Belongs to the ATPase C chain family. In terms of assembly, F-type ATPases have 2 components, CF(1) - the catalytic core - and CF(0) - the membrane proton channel. CF(1) has five subunits: alpha(3), beta(3), gamma(1), delta(1), epsilon(1). CF(0) has three main subunits: a, b and c.

It localises to the mitochondrion membrane. Functionally, this protein is one of the chains of the nonenzymatic membrane component (F0) of mitochondrial ATPase. The protein is ATP synthase subunit 9, mitochondrial (ATP9) of Malus domestica (Apple).